A 166-amino-acid polypeptide reads, in one-letter code: UPF0178 protein BPUM_2255 (166 aa).

It belongs to the UPF0178 family.

The polypeptide is UPF0178 protein BPUM_2255 (Bacillus pumilus (strain SAFR-032)).